We begin with the raw amino-acid sequence, 201 residues long: Potassium-transporting ATPase KdpC subunit (201 aa).

The chain crosses the membrane as a helical span at residues 7 to 27 (PAFVVLIALTALTGLAYPLAM).

This sequence belongs to the KdpC family. As to quaternary structure, the system is composed of three essential subunits: KdpA, KdpB and KdpC.

Its subcellular location is the cell inner membrane. Its function is as follows. Part of the high-affinity ATP-driven potassium transport (or Kdp) system, which catalyzes the hydrolysis of ATP coupled with the electrogenic transport of potassium into the cytoplasm. This subunit acts as a catalytic chaperone that increases the ATP-binding affinity of the ATP-hydrolyzing subunit KdpB by the formation of a transient KdpB/KdpC/ATP ternary complex. The protein is Potassium-transporting ATPase KdpC subunit of Xanthobacter autotrophicus (strain ATCC BAA-1158 / Py2).